Consider the following 562-residue polypeptide: Potassium-transporting ATPase potassium-binding subunit (562 aa).

Transmembrane regions (helical) follow at residues 5–25 (AFLL…PLGS), 63–83 (AAAI…LLMA), 132–152 (GLTV…FALI), 175–195 (LYVL…QGVL), 250–270 (LSNI…CFAF), 279–299 (QGHA…AVVM), 379–399 (GLYG…LMIG), 416–436 (MTAL…ALAL), 483–503 (VLLA…VLAI), and 526–546 (LFIG…FIPA).

The protein belongs to the KdpA family. In terms of assembly, the system is composed of three essential subunits: KdpA, KdpB and KdpC.

Its subcellular location is the cell inner membrane. Its function is as follows. Part of the high-affinity ATP-driven potassium transport (or Kdp) system, which catalyzes the hydrolysis of ATP coupled with the electrogenic transport of potassium into the cytoplasm. This subunit binds the periplasmic potassium ions and delivers the ions to the membrane domain of KdpB through an intramembrane tunnel. This is Potassium-transporting ATPase potassium-binding subunit from Pectobacterium atrosepticum (strain SCRI 1043 / ATCC BAA-672) (Erwinia carotovora subsp. atroseptica).